The primary structure comprises 278 residues: Adenosylcobinamide-GDP ribazoletransferase (278 aa).

Helical transmembrane passes span 44-64 (GIGV…QLLL), 69-89 (FTPL…TGGF), 121-141 (AFGA…LALL), 161-181 (VCAA…VMIW), 204-224 (GGLA…SLAL), and 227-247 (INLI…LRFF).

This sequence belongs to the CobS family. Mg(2+) is required as a cofactor.

Its subcellular location is the cell inner membrane. It carries out the reaction alpha-ribazole + adenosylcob(III)inamide-GDP = adenosylcob(III)alamin + GMP + H(+). It catalyses the reaction alpha-ribazole 5'-phosphate + adenosylcob(III)inamide-GDP = adenosylcob(III)alamin 5'-phosphate + GMP + H(+). It participates in cofactor biosynthesis; adenosylcobalamin biosynthesis; adenosylcobalamin from cob(II)yrinate a,c-diamide: step 7/7. Joins adenosylcobinamide-GDP and alpha-ribazole to generate adenosylcobalamin (Ado-cobalamin). Also synthesizes adenosylcobalamin 5'-phosphate from adenosylcobinamide-GDP and alpha-ribazole 5'-phosphate. The protein is Adenosylcobinamide-GDP ribazoletransferase of Polaromonas naphthalenivorans (strain CJ2).